The chain runs to 474 residues: Ribulose bisphosphate carboxylase large chain (474 aa).

An N6,N6,N6-trimethyllysine modification is found at Lys-13. Asn-122 and Thr-172 together coordinate substrate. Lys-174 acts as the Proton acceptor in catalysis. Residue Lys-176 participates in substrate binding. Residues Lys-200, Asp-202, and Glu-203 each coordinate Mg(2+). Lys-200 bears the N6-carboxylysine mark. His-293 serves as the catalytic Proton acceptor. Arg-294, His-326, and Ser-378 together coordinate substrate.

The protein belongs to the RuBisCO large chain family. Type I subfamily. In terms of assembly, heterohexadecamer of 8 large chains and 8 small chains; disulfide-linked. The disulfide link is formed within the large subunit homodimers. The cofactor is Mg(2+). Post-translationally, the disulfide bond which can form in the large chain dimeric partners within the hexadecamer appears to be associated with oxidative stress and protein turnover.

It is found in the plastid. The protein resides in the chloroplast. It carries out the reaction 2 (2R)-3-phosphoglycerate + 2 H(+) = D-ribulose 1,5-bisphosphate + CO2 + H2O. The enzyme catalyses D-ribulose 1,5-bisphosphate + O2 = 2-phosphoglycolate + (2R)-3-phosphoglycerate + 2 H(+). RuBisCO catalyzes two reactions: the carboxylation of D-ribulose 1,5-bisphosphate, the primary event in carbon dioxide fixation, as well as the oxidative fragmentation of the pentose substrate in the photorespiration process. Both reactions occur simultaneously and in competition at the same active site. This is Ribulose bisphosphate carboxylase large chain from Dendrophthora clavata (Columbian mistletoe).